A 144-amino-acid polypeptide reads, in one-letter code: Large ribosomal subunit protein uL15 (144 aa).

The tract at residues 1-57 (MELNNLKPAEGAKHAKRRVGRGIGSGLGKTAGRGHKGQKSRSGGFHKVGFEGGQMPL) is disordered. Residues 21–31 (RGIGSGLGKTA) show a composition bias toward gly residues.

The protein belongs to the universal ribosomal protein uL15 family. In terms of assembly, part of the 50S ribosomal subunit.

In terms of biological role, binds to the 23S rRNA. The chain is Large ribosomal subunit protein uL15 from Paraburkholderia xenovorans (strain LB400).